A 155-amino-acid polypeptide reads, in one-letter code: Ribosome maturation factor RimP (155 aa).

Belongs to the RimP family.

It localises to the cytoplasm. Its function is as follows. Required for maturation of 30S ribosomal subunits. The sequence is that of Ribosome maturation factor RimP from Prochlorococcus marinus subsp. pastoris (strain CCMP1986 / NIES-2087 / MED4).